The primary structure comprises 539 residues: Sporozoite-associated protein (539 aa).

N-linked (GlcNAc...) asparagine glycans are attached at residues Asn-31, Asn-90, Asn-102, Asn-149, and Asn-167. The disordered stretch occupies residues 126–153 (LTQSPPPAAAPQSPSPRAILSPRNVSKT). Residues 192 to 215 (VVAEKSNTPTTPKTTPNGKWTGKN) are compositionally biased toward low complexity. The segment at 192-231 (VVAEKSNTPTTPKTTPNGKWTGKNANATIETSNTDHTPPS) is disordered. Over residues 216 to 228 (ANATIETSNTDHT) the composition is skewed to polar residues. N-linked (GlcNAc...) asparagine glycosylation is found at Asn-217, Asn-271, and Asn-288. A disordered region spans residues 303 to 355 (TLISRAQDDKPGTKGGSDETSSSTAASNERQPMFPNDNDDDDIDQTYCPGVES). Over residues 320–332 (DETSSSTAASNER) the composition is skewed to polar residues. 2 N-linked (GlcNAc...) asparagine glycosylation sites follow: Asn-427 and Asn-503.

Saliva (at protein level). Female salivary gland. Female midgut.

The protein resides in the secreted. Its function is as follows. Binds heparan sulfate proteoglycans present on the mammalian cell surface. Modulates host immune responses at the site of inoculation via decreasing the expression of TNF-alpha/TNF, IL-1beta/IL1B, IFN-gamma/IFNG, IL4, MMP9, TGF-beta and ICAM1. In terms of biological role, (Microbial infection) Interacts with the surface of Plasmodium berghei sporozoites. Promotes Plasmodium berghei transmission to the mouse host. Does not affect Plasmodium berghei sporozoite viability. (Microbial infection) Interacts with the surface of Plasmodium falciparum sporozoites. This is Sporozoite-associated protein from Anopheles gambiae (African malaria mosquito).